A 65-amino-acid chain; its full sequence is Large ribosomal subunit protein bL35 (65 aa).

The protein belongs to the bacterial ribosomal protein bL35 family.

The polypeptide is Large ribosomal subunit protein bL35 (Synechococcus sp. (strain WH7803)).